A 310-amino-acid polypeptide reads, in one-letter code: Pantothenate kinase (310 aa).

95–102 (GSVAVGKS) contacts ATP.

This sequence belongs to the prokaryotic pantothenate kinase family.

The protein localises to the cytoplasm. The enzyme catalyses (R)-pantothenate + ATP = (R)-4'-phosphopantothenate + ADP + H(+). It participates in cofactor biosynthesis; coenzyme A biosynthesis; CoA from (R)-pantothenate: step 1/5. This chain is Pantothenate kinase, found in Mycobacteroides abscessus (strain ATCC 19977 / DSM 44196 / CCUG 20993 / CIP 104536 / JCM 13569 / NCTC 13031 / TMC 1543 / L948) (Mycobacterium abscessus).